The following is a 113-amino-acid chain: Outer membrane protein assembly factor BamE (113 aa).

An N-terminal signal peptide occupies residues Met-1–Gly-19. Cys-20 carries N-palmitoyl cysteine lipidation. Cys-20 is lipidated: S-diacylglycerol cysteine.

This sequence belongs to the BamE family. As to quaternary structure, part of the Bam complex, which is composed of the outer membrane protein BamA, and four lipoproteins BamB, BamC, BamD and BamE.

The protein localises to the cell outer membrane. Part of the outer membrane protein assembly complex, which is involved in assembly and insertion of beta-barrel proteins into the outer membrane. This Escherichia coli O6:H1 (strain CFT073 / ATCC 700928 / UPEC) protein is Outer membrane protein assembly factor BamE.